We begin with the raw amino-acid sequence, 567 residues long: UPF0313 protein TM_0337 (567 aa).

The Radical SAM core domain occupies 288-560 (KAIETVKFSI…NKMKENVLFK (273 aa)). Cysteine 303, cysteine 307, and cysteine 310 together coordinate [4Fe-4S] cluster.

Belongs to the UPF0313 family. The cofactor is [4Fe-4S] cluster.

This is UPF0313 protein TM_0337 from Thermotoga maritima (strain ATCC 43589 / DSM 3109 / JCM 10099 / NBRC 100826 / MSB8).